The chain runs to 318 residues: Pyrimidine-specific ribonucleoside hydrolase RihA (318 aa).

Histidine 240 is an active-site residue.

Belongs to the IUNH family. RihA subfamily.

In terms of biological role, hydrolyzes cytidine or uridine to ribose and cytosine or uracil, respectively. The chain is Pyrimidine-specific ribonucleoside hydrolase RihA from Shewanella baltica (strain OS185).